We begin with the raw amino-acid sequence, 669 residues long: DNA ligase (669 aa).

Residues 32 to 36 (DAEYD), 81 to 82 (SL), and Glu-113 each bind NAD(+). Lys-115 serves as the catalytic N6-AMP-lysine intermediate. 4 residues coordinate NAD(+): Arg-136, Glu-173, Lys-290, and Lys-314. Residues Cys-408, Cys-411, Cys-426, and Cys-432 each coordinate Zn(2+). The region spanning 592-669 (AVDSALAGKI…DEQALIEFLK (78 aa)) is the BRCT domain.

Belongs to the NAD-dependent DNA ligase family. LigA subfamily. Mg(2+) is required as a cofactor. The cofactor is Mn(2+).

The catalysed reaction is NAD(+) + (deoxyribonucleotide)n-3'-hydroxyl + 5'-phospho-(deoxyribonucleotide)m = (deoxyribonucleotide)n+m + AMP + beta-nicotinamide D-nucleotide.. In terms of biological role, DNA ligase that catalyzes the formation of phosphodiester linkages between 5'-phosphoryl and 3'-hydroxyl groups in double-stranded DNA using NAD as a coenzyme and as the energy source for the reaction. It is essential for DNA replication and repair of damaged DNA. In Vibrio cholerae serotype O1 (strain ATCC 39541 / Classical Ogawa 395 / O395), this protein is DNA ligase.